The primary structure comprises 115 residues: Meromycolate extension acyl carrier protein (115 aa).

The region spanning 3-81 (VTQEEIIAGI…DVVTYIQKLE (79 aa)) is the Carrier domain. Position 41 is an O-(pantetheine 4'-phosphoryl)serine (Ser-41).

The protein belongs to the acyl carrier protein (ACP) family. Post-translationally, 4'-phosphopantetheine is transferred from CoA to a specific serine of apo-AcpM.

It is found in the cytoplasm. Acyl carrier protein involved in meromycolate extension. This is Meromycolate extension acyl carrier protein (acpM) from Mycobacterium leprae (strain TN).